The sequence spans 678 residues: Auxin response factor 7 (678 aa).

A DNA-binding region (TF-B3) is located at residues 128–230 (FCKTLTASDT…ELRVGVRRLM (103 aa)). Disordered stretches follow at residues 360 to 386 (AVSN…NSIA) and 502 to 547 (GVGQ…SRQV). Residues 548-641 (RSCTKVIMQG…EAKQLTPKSK (94 aa)) enclose the PB1 domain. A disordered region spans residues 643–678 (PIIGDAIKPNPNKQSPESDMPHSDLDSTAPVTDKDC).

It belongs to the ARF family. As to quaternary structure, homodimers and heterodimers. In terms of tissue distribution, expressed in roots, culms, leaves and young panicles.

The protein localises to the nucleus. In terms of biological role, auxin response factors (ARFs) are transcriptional factors that bind specifically to the DNA sequence 5'-TGTCTC-3' found in the auxin-responsive promoter elements (AuxREs). This Oryza sativa subsp. japonica (Rice) protein is Auxin response factor 7 (ARF7).